The following is a 147-amino-acid chain: Interleukin-4 (147 aa).

The signal sequence occupies residues 1-19 (MGLRPQLAAILLCLLACTG). N-linked (GlcNAc...) asparagine glycans are attached at residues N20, N61, N90, and N117. 2 disulfide bridges follow: C47-C87 and C69-C114.

This sequence belongs to the IL-4/IL-13 family.

The protein resides in the secreted. Participates in at least several B-cell activation processes as well as of other cell types. It is a costimulator of DNA-synthesis. It induces the expression of class II MHC molecules on resting B-cells. It enhances both secretion and cell surface expression of IgE and IgG1. It also regulates the expression of the low affinity Fc receptor for IgE (CD23) on both lymphocytes and monocytes. Positively regulates IL31RA expression in macrophages. Stimulates autophagy in dendritic cells by interfering with mTORC1 signaling and through the induction of RUFY4. The protein is Interleukin-4 (IL4) of Mesocricetus auratus (Golden hamster).